Here is a 178-residue protein sequence, read N- to C-terminus: Ribosome maturation factor RimP (178 aa).

Belongs to the RimP family.

Its subcellular location is the cytoplasm. Required for maturation of 30S ribosomal subunits. This chain is Ribosome maturation factor RimP, found in Maricaulis maris (strain MCS10) (Caulobacter maris).